Consider the following 357-residue polypeptide: Probable dual-specificity RNA methyltransferase RlmN (357 aa).

Glutamate 92 serves as the catalytic Proton acceptor. The 239-residue stretch at 98–336 (HKYGLSVCVT…CGVRLEHGTD (239 aa)) folds into the Radical SAM core domain. Cysteine 105 and cysteine 341 are oxidised to a cystine. Positions 112, 116, and 119 each coordinate [4Fe-4S] cluster. S-adenosyl-L-methionine contacts are provided by residues 164–165 (GE), serine 196, 219–221 (SLH), and asparagine 297. Cysteine 341 functions as the S-methylcysteine intermediate in the catalytic mechanism.

The protein belongs to the radical SAM superfamily. RlmN family. The cofactor is [4Fe-4S] cluster.

The protein localises to the cytoplasm. It carries out the reaction adenosine(2503) in 23S rRNA + 2 reduced [2Fe-2S]-[ferredoxin] + 2 S-adenosyl-L-methionine = 2-methyladenosine(2503) in 23S rRNA + 5'-deoxyadenosine + L-methionine + 2 oxidized [2Fe-2S]-[ferredoxin] + S-adenosyl-L-homocysteine. The enzyme catalyses adenosine(37) in tRNA + 2 reduced [2Fe-2S]-[ferredoxin] + 2 S-adenosyl-L-methionine = 2-methyladenosine(37) in tRNA + 5'-deoxyadenosine + L-methionine + 2 oxidized [2Fe-2S]-[ferredoxin] + S-adenosyl-L-homocysteine. In terms of biological role, specifically methylates position 2 of adenine 2503 in 23S rRNA and position 2 of adenine 37 in tRNAs. The sequence is that of Probable dual-specificity RNA methyltransferase RlmN from Exiguobacterium sibiricum (strain DSM 17290 / CCUG 55495 / CIP 109462 / JCM 13490 / 255-15).